The primary structure comprises 390 residues: Succinyl-diaminopimelate desuccinylase (390 aa).

A Zn(2+)-binding site is contributed by histidine 74. Residue aspartate 76 is part of the active site. Position 107 (aspartate 107) interacts with Zn(2+). Glutamate 140 (proton acceptor) is an active-site residue. Glutamate 141, glutamate 169, and histidine 363 together coordinate Zn(2+).

The protein belongs to the peptidase M20A family. DapE subfamily. In terms of assembly, homodimer. Requires Zn(2+) as cofactor. Co(2+) serves as cofactor.

It carries out the reaction N-succinyl-(2S,6S)-2,6-diaminopimelate + H2O = (2S,6S)-2,6-diaminopimelate + succinate. The protein operates within amino-acid biosynthesis; L-lysine biosynthesis via DAP pathway; LL-2,6-diaminopimelate from (S)-tetrahydrodipicolinate (succinylase route): step 3/3. Its function is as follows. Catalyzes the hydrolysis of N-succinyl-L,L-diaminopimelic acid (SDAP), forming succinate and LL-2,6-diaminopimelate (DAP), an intermediate involved in the bacterial biosynthesis of lysine and meso-diaminopimelic acid, an essential component of bacterial cell walls. This Bartonella bacilliformis (strain ATCC 35685 / KC583 / Herrer 020/F12,63) protein is Succinyl-diaminopimelate desuccinylase.